A 241-amino-acid polypeptide reads, in one-letter code: Ribonuclease PH (241 aa).

Phosphate is bound by residues R86 and 124-126 (GTR).

This sequence belongs to the RNase PH family. Homohexameric ring arranged as a trimer of dimers.

The enzyme catalyses tRNA(n+1) + phosphate = tRNA(n) + a ribonucleoside 5'-diphosphate. In terms of biological role, phosphorolytic 3'-5' exoribonuclease that plays an important role in tRNA 3'-end maturation. Removes nucleotide residues following the 3'-CCA terminus of tRNAs; can also add nucleotides to the ends of RNA molecules by using nucleoside diphosphates as substrates, but this may not be physiologically important. Probably plays a role in initiation of 16S rRNA degradation (leading to ribosome degradation) during starvation. This chain is Ribonuclease PH, found in Hamiltonella defensa subsp. Acyrthosiphon pisum (strain 5AT).